The chain runs to 97 residues: Essential MCU regulator, mitochondrial (97 aa).

A mitochondrion-targeting transit peptide spans methionine 1–threonine 37. Residues valine 38–phenylalanine 55 lie on the Mitochondrial matrix side of the membrane. The helical transmembrane segment at glycine 56–serine 75 threads the bilayer. Topologically, residues lysine 76–aspartate 97 are mitochondrial intermembrane.

Belongs to the SMDT1/EMRE family. In terms of assembly, component of the uniplex complex.

The protein localises to the mitochondrion inner membrane. Its function is as follows. Essential regulatory subunit of the mitochondrial calcium uniporter complex (uniplex), a complex that mediates calcium uptake into mitochondria. Required to bridge the calcium-sensing proteins micu1 with the calcium-conducting subunit mcu. Acts by mediating activation of mcu and retention of micu1 to the mcu pore, in order to ensure tight regulation of the uniplex complex and appropriate responses to intracellular calcium signaling. This is Essential MCU regulator, mitochondrial from Xenopus laevis (African clawed frog).